Here is a 773-residue protein sequence, read N- to C-terminus: Leucine-rich repeat and calponin homology domain-containing protein 2 (773 aa).

Positions Met-1–Gly-46 are disordered. LRR repeat units follow at residues Asn-97–Leu-118, Asp-120–Phe-141, Pro-143–Leu-164, Met-166–Leu-187, Pro-188–Leu-209, Asp-211–Leu-232, Ser-234–Pro-256, Leu-257–Leu-277, and His-279–Lys-300. 3 disordered regions span residues Leu-324–Gln-409, Phe-438–Val-478, and Lys-573–Glu-633. Composition is skewed to basic and acidic residues over residues Ser-386–Ser-396 and Lys-440–Leu-466. The span at Ala-594 to Ser-603 shows a compositional bias: polar residues. The region spanning Leu-650–Pro-763 is the Calponin-homology (CH) domain.

Functionally, may play a role in the organization of the cytoskeleton. This chain is Leucine-rich repeat and calponin homology domain-containing protein 2 (Lrch2), found in Mus musculus (Mouse).